Consider the following 806-residue polypeptide: N-terminal kinase-like protein (806 aa).

The 301-residue stretch at 14-314 (FELSPEPPEG…PEDFCRHKVL (301 aa)) folds into the Protein kinase domain. 3 HEAT repeats span residues 350-388 (IIPVVVKMFSSTDRAMRIRLLQQMEQFIQYLDEPTVNTQ), 389-427 (IFPHVTHGFLDTNPAIREQTVKSMLLLAPKLNEANLNVE), and 507-545 (ILPVLCGLTVDPEKSVRDQAFKTIRSFLSKLESVSEDPT). 2 disordered regions span residues 586 to 642 (RAHP…TADR) and 663 to 806 (DDWS…RKLD). Residues 601–611 (RPVPEGNPAPA) are compositionally biased toward pro residues. S752 carries the phosphoserine modification. Positions 752 to 762 (SWGEDNWEGLE) are enriched in acidic residues. Positions 755–795 (EDNWEGLEAESRQVKAELARKKREERRREMEAKRAEKKTTK) form a coiled coil. 2 stretches are compositionally biased toward basic and acidic residues: residues 763–773 (AESRQVKAELA) and 780–793 (RRREMEAKRAEKKT). The interaction with COPB1 stretch occupies residues 791–806 (KKTTKGPMKLGARKLD).

Belongs to the protein kinase superfamily. In terms of assembly, homooligomer. Interacts with GORAB. Interacts with COPA, COPB1 and COPB2. Interacts with AP2B1. In terms of tissue distribution, expressed in diaphragm, quadriceps, thymus, liver, lung, spleen, kidney, heart and brain. Prominently expressed in neurons, and enriched at central nervous system synapses and neuromuscular junctions.

The protein resides in the cytoplasm. Its subcellular location is the cytoskeleton. It localises to the microtubule organizing center. The protein localises to the centrosome. It is found in the endoplasmic reticulum-Golgi intermediate compartment. The protein resides in the golgi apparatus. Its subcellular location is the cis-Golgi network. Regulates COPI-mediated retrograde protein traffic at the interface between the Golgi apparatus and the endoplasmic reticulum. Involved in the maintenance of the Golgi apparatus morphology. This is N-terminal kinase-like protein (Scyl1) from Mus musculus (Mouse).